The following is a 343-amino-acid chain: 3-isopropylmalate dehydrogenase (343 aa).

The substrate site is built by R94, R104, R128, and D218. Mg(2+) is bound by residues D218, D242, and D246. 278-290 (GSAPDIAGQNKAN) serves as a coordination point for NAD(+).

This sequence belongs to the isocitrate and isopropylmalate dehydrogenases family. LeuB type 2 subfamily. Homodimer. Mg(2+) serves as cofactor. The cofactor is Mn(2+).

The protein localises to the cytoplasm. The catalysed reaction is (2R,3S)-3-isopropylmalate + NAD(+) = 4-methyl-2-oxopentanoate + CO2 + NADH. The protein operates within amino-acid biosynthesis; L-leucine biosynthesis; L-leucine from 3-methyl-2-oxobutanoate: step 3/4. In terms of biological role, catalyzes the oxidation of 3-carboxy-2-hydroxy-4-methylpentanoate (3-isopropylmalate) to 3-carboxy-4-methyl-2-oxopentanoate. The product decarboxylates to 4-methyl-2 oxopentanoate. This chain is 3-isopropylmalate dehydrogenase, found in Bifidobacterium longum (strain DJO10A).